The following is a 473-amino-acid chain: Adenosylhomocysteinase (473 aa).

The substrate site is built by Thr64, Asp139, and Glu199. 200-202 (TTT) is an NAD(+) binding site. Residues Lys229 and Asp233 each contribute to the substrate site. Residues Asn234, 263-268 (GYGDVG), Glu286, Asn321, 342-344 (IGH), and Asn387 each bind NAD(+).

Belongs to the adenosylhomocysteinase family. NAD(+) serves as cofactor.

It localises to the cytoplasm. The enzyme catalyses S-adenosyl-L-homocysteine + H2O = L-homocysteine + adenosine. It functions in the pathway amino-acid biosynthesis; L-homocysteine biosynthesis; L-homocysteine from S-adenosyl-L-homocysteine: step 1/1. Its function is as follows. May play a key role in the regulation of the intracellular concentration of adenosylhomocysteine. The chain is Adenosylhomocysteinase from Burkholderia mallei (strain SAVP1).